A 29-amino-acid chain; its full sequence is Cytochrome b6-f complex subunit 8 (29 aa).

Residues 3-23 (IVNIAWAALMVVSTFSLTLVV) form a helical membrane-spanning segment.

The protein belongs to the PetN family. The 4 large subunits of the cytochrome b6-f complex are cytochrome b6, subunit IV (17 kDa polypeptide, PetD), cytochrome f and the Rieske protein, while the 4 small subunits are PetG, PetL, PetM and PetN. The complex functions as a dimer.

Its subcellular location is the plastid. The protein resides in the chloroplast thylakoid membrane. In terms of biological role, component of the cytochrome b6-f complex, which mediates electron transfer between photosystem II (PSII) and photosystem I (PSI), cyclic electron flow around PSI, and state transitions. The chain is Cytochrome b6-f complex subunit 8 from Huperzia lucidula (Shining clubmoss).